A 240-amino-acid polypeptide reads, in one-letter code: Acyl-protein thioesterase 1 (240 aa).

Catalysis depends on charge relay system residues Ser-129, Asp-183, and His-219.

The protein belongs to the AB hydrolase superfamily. AB hydrolase 2 family.

It localises to the cytoplasm. Its subcellular location is the nucleus. It carries out the reaction S-hexadecanoyl-L-cysteinyl-[protein] + H2O = L-cysteinyl-[protein] + hexadecanoate + H(+). Hydrolyzes fatty acids from S-acylated cysteine residues in proteins with a strong preference for palmitoylated G-alpha proteins over other acyl substrates. Mediates the deacylation of G-alpha proteins such as GPA1 in vivo, but has weak or no activity toward palmitoylated Ras proteins. Has weak lysophospholipase activity in vitro; however such activity may not exist in vivo. In Mycosarcoma maydis (Corn smut fungus), this protein is Acyl-protein thioesterase 1.